The chain runs to 627 residues: tRNA uridine 5-carboxymethylaminomethyl modification enzyme MnmG (627 aa).

Residues 13–18, V125, and S180 each bind FAD; that span reads GGGHAG. NAD(+) is bound at residue 274-288; it reads GPRYCPSIEDKVVRF. Q371 provides a ligand contact to FAD.

Belongs to the MnmG family. As to quaternary structure, homodimer. Heterotetramer of two MnmE and two MnmG subunits. The cofactor is FAD.

It is found in the cytoplasm. NAD-binding protein involved in the addition of a carboxymethylaminomethyl (cmnm) group at the wobble position (U34) of certain tRNAs, forming tRNA-cmnm(5)s(2)U34. The sequence is that of tRNA uridine 5-carboxymethylaminomethyl modification enzyme MnmG from Francisella tularensis subsp. holarctica (strain FTNF002-00 / FTA).